A 78-amino-acid polypeptide reads, in one-letter code: Large ribosomal subunit protein bL28 (78 aa).

Residues 1 to 23 (MSRVCQVTGKKPMVGNNRSHAKN) are disordered.

It belongs to the bacterial ribosomal protein bL28 family.

This Shewanella frigidimarina (strain NCIMB 400) protein is Large ribosomal subunit protein bL28.